A 68-amino-acid chain; its full sequence is Medusin-DA1 (68 aa).

Residues 1 to 22 form the signal peptide; that stretch reads MAFLKKSLFLVLFLGLVSLSVC. A propeptide spanning residues 23–48 is cleaved from the precursor; that stretch reads EEEKRENEEEKNEQEEDDREERNEEK. The interval 25–47 is disordered; that stretch reads EKRENEEEKNEQEEDDREERNEE. A compositionally biased stretch (acidic residues) spans 31–41; that stretch reads EEKNEQEEDDR. Leu-67 carries the leucine amide modification.

The protein belongs to the frog skin active peptide (FSAP) family. Medusin subfamily. As to expression, expressed by the skin glands.

It is found in the secreted. Its function is as follows. Antimicrobial peptide with activity against Gram-positive bacteria (S.aureus, MIC=32 mg/L) and fungi (C.albicans, MIC=64 mg/L). Shows weak hemolytic activity. The protein is Medusin-DA1 of Agalychnis dacnicolor (Giant Mexican leaf frog).